The primary structure comprises 367 residues: Pectate lyase 1 (367 aa).

Positions 1 to 21 (MASPCLIAVLVFLCAIVSCYS) are cleaved as a signal peptide. A disulfide bridge connects residues Cys28 and Cys45. The segment at 38–305 (NRMKLADCAV…YKKEVTKRIG (268 aa)) is beta-helix. The tract at residues 92–104 (IFSQNMNIKLKMP) is igE-binding. Binds to IgE in 5 out of 7 patients tested. An intrachain disulfide couples Cys128 to Cys147. Residue Asn148 is glycosylated (N-linked (GlcNAc...) asparagine). Asp170 is a binding site for Ca(2+). Asn178 carries N-linked (GlcNAc...) asparagine glycosylation. Residues Asp194 and Asp198 each contribute to the Ca(2+) site. Positions 239 to 250 (AFNQFGPNAGQR) are igE-binding. Binds to IgE in 6 out of 7 patients tested. The active site involves Arg250. Residues 251–258 (MPRARYGL) form an igE-binding. Binds to IgE in 5 out of 7 patients tested region. Cys306 and Cys312 form a disulfide bridge. The interval 317-327 (WRSTRDAFING) is igE-binding. Binds to IgE in 3 out of 7 patients tested.

Belongs to the polysaccharide lyase 1 family. Amb a subfamily. It depends on Ca(2+) as a cofactor. In terms of processing, N-glycosylated; consists of complex-type N-glycans containing the Lewis a antigen (Galbeta1-3(Fucalpha1-4)GlcNAcbeta1-). In terms of tissue distribution, expressed in pollen (at protein level).

It carries out the reaction Eliminative cleavage of (1-&gt;4)-alpha-D-galacturonan to give oligosaccharides with 4-deoxy-alpha-D-galact-4-enuronosyl groups at their non-reducing ends.. The protein operates within glycan metabolism; pectin degradation; 2-dehydro-3-deoxy-D-gluconate from pectin: step 2/5. In terms of biological role, has low pectate lyase activity. The protein is Pectate lyase 1 of Juniperus ashei (Ozark white cedar).